Reading from the N-terminus, the 285-residue chain is Phosphatidylglycerol--prolipoprotein diacylglyceryl transferase (285 aa).

5 helical membrane passes run Ala-17 to Leu-37, Trp-43 to Leu-63, Leu-78 to Tyr-98, Trp-113 to Val-133, and Leu-139 to Gly-159. Arg-160 provides a ligand contact to a 1,2-diacyl-sn-glycero-3-phospho-(1'-sn-glycerol). 3 consecutive transmembrane segments (helical) span residues Leu-195–Ala-215, Gly-223–Phe-243, and Gly-256–Ile-276.

The protein belongs to the Lgt family.

It localises to the cell inner membrane. It carries out the reaction L-cysteinyl-[prolipoprotein] + a 1,2-diacyl-sn-glycero-3-phospho-(1'-sn-glycerol) = an S-1,2-diacyl-sn-glyceryl-L-cysteinyl-[prolipoprotein] + sn-glycerol 1-phosphate + H(+). It participates in protein modification; lipoprotein biosynthesis (diacylglyceryl transfer). In terms of biological role, catalyzes the transfer of the diacylglyceryl group from phosphatidylglycerol to the sulfhydryl group of the N-terminal cysteine of a prolipoprotein, the first step in the formation of mature lipoproteins. The polypeptide is Phosphatidylglycerol--prolipoprotein diacylglyceryl transferase (Zymomonas mobilis subsp. mobilis (strain ATCC 31821 / ZM4 / CP4)).